Here is an 892-residue protein sequence, read N- to C-terminus: MTQYTPMIQQYLKVKADYQDAFLFFRLGDFYEMFFEDAVKAAHELEITLTSRDGGSSERIPMCGVPYHAAKNYIEQLVEKGYKVAVCEQVEDPKTAKGVVRREVVQLITPGTMMEGRTIDEKENNFLAALTHFEDGSYALACNDLTTGQNTVTLLTGSVEDILLEVYATGSKEIVVDSSFSKDELNKLTETLKMTISYEDATAIPEGLEHLVKNVSQAKLIKAVGRLFNYVIRTQKRSLDHLQPVEIYYTNQFMKIDVHSKRNLELTETLRTKEKTGSLLWLLDKTKTAMGGRMLKQWMERPLIQKERIEERLEMVETFVNDYFLREDLKEKLKEVYDLERLAGKVAFGNVNARDLLQLRRSLLQVPAILEAISLLDNAYAARLIQGADPCESLTELLGRSIQENPPLSIKDGDIIKDGYNDKLDQYRYVSKNGKTWIAELEKRERDITGIKSLKIGYNRIFGYYIEVTKANLGALPEGRYERKQTLANAERFITDELKEKETLILEAEEKIVQLEYDLFTALREEVKVFIPKLQHLAKVISELDVLQSFATVSEEEQFVKPVLTTKREIFIKDGRHPVVEKVLNGKLYVPNDCIMPENMDVFLITGPNMSGKSTYMRQLALVTVMSQIGCFVPATEAVLPVFDQIFTRIGAADDLISGQSTFMVEMLEAKNAIANASERSLILFDEIGRGTSTYDGMALAQAIIEHIHDQIGAKTLFSTHYHELTVLEDSLDQLKNVHVSAIEENGKVVFLHKIQDGAADKSYGIHVAQLAELPDSLIARAKEVLAQLEGQEEIVIPKRVEVKAQEQEVIPEPIVVKEEPIEIEETKVDNEEESQLSFFGAEQSSKKQDKPALDAKETAVLTQIKKIDLLDMTPLEAMNELYRLQKKLKKG.

607–614 (GPNMSGKS) contributes to the ATP binding site. Positions 833–855 (EESQLSFFGAEQSSKKQDKPALD) are disordered. The segment covering 845–855 (SSKKQDKPALD) has biased composition (basic and acidic residues).

The protein belongs to the DNA mismatch repair MutS family.

This protein is involved in the repair of mismatches in DNA. It is possible that it carries out the mismatch recognition step. This protein has a weak ATPase activity. This Bacillus anthracis (strain A0248) protein is DNA mismatch repair protein MutS.